A 466-amino-acid chain; its full sequence is Asparagine--tRNA ligase (466 aa).

The protein belongs to the class-II aminoacyl-tRNA synthetase family. As to quaternary structure, homodimer.

The protein localises to the cytoplasm. The catalysed reaction is tRNA(Asn) + L-asparagine + ATP = L-asparaginyl-tRNA(Asn) + AMP + diphosphate + H(+). This chain is Asparagine--tRNA ligase, found in Vibrio vulnificus (strain YJ016).